We begin with the raw amino-acid sequence, 493 residues long: Transmembrane and coiled-coil domain-containing protein 6 (493 aa).

Residues 15-84 (GVEELRRRRR…QRGTEEKERE (70 aa)) adopt a coiled-coil conformation. 2 helical membrane-spanning segments follow: residues 338 to 358 (VVAA…SLLP) and 386 to 406 (PLLQ…TVLC).

The protein resides in the membrane. This chain is Transmembrane and coiled-coil domain-containing protein 6 (TMCO6), found in Homo sapiens (Human).